The following is a 117-amino-acid chain: uncharacterized protein (117 aa).

The chain crosses the membrane as a helical span at residues 1–21 (MEIAIIALFIVSIALIAFSYS). Residues 38–67 (LSAMQEIYKLKKKMTVLEEELLETNLVIRK) adopt a coiled-coil conformation.

It localises to the cell membrane. This is an uncharacterized protein from Bacillus subtilis (strain 168).